The primary structure comprises 723 residues: Nucleolar protein 11 (723 aa).

It localises to the nucleus. The protein resides in the nucleolus. Functionally, ribosome biogenesis factor. May be required for both optimal rDNA transcription and pre-rRNA processing. This chain is Nucleolar protein 11 (NOL11), found in Gallus gallus (Chicken).